Consider the following 257-residue polypeptide: Large ribosomal subunit protein uL2 (257 aa).

Residues K42 and K149 each participate in a glycyl lysine isopeptide (Lys-Gly) (interchain with G-Cter in SUMO2) cross-link. Residues 207 to 232 (VEHPFGGGNHQHIGKPSTIRRDAPAG) form a disordered region. A (3S)-3-hydroxyhistidine modification is found at H216. Glycyl lysine isopeptide (Lys-Gly) (interchain with G-Cter in SUMO2) cross-links involve residues K234 and K250.

This sequence belongs to the universal ribosomal protein uL2 family. As to quaternary structure, component of the large ribosomal subunit. Interacts with CRY1. Post-translationally, hydroxylated on His-216 by RIOX1. The modification is impaired by hypoxia.

It is found in the cytoplasm. Its function is as follows. Component of the large ribosomal subunit. The ribosome is a large ribonucleoprotein complex responsible for the synthesis of proteins in the cell. The chain is Large ribosomal subunit protein uL2 (RPL8) from Bos taurus (Bovine).